The following is a 257-amino-acid chain: MADTWSIGAHAFTSRLLVGTGKYPDFPTMQRALAASGAEVVTVAVRRLDLSKKGEESLLAWIPKGMKLLPNTAACFTAEEAIRTARLGRELEMGDLVKLEVIGDRRTLFPDVEGLIQAAKVLVKEGFTVLPYTNDDPVTAKKLEDAGCAAVMPLGAPIGSGLGLRNPYNLRIIMETVQVPVLVDAGVGTASDAALAMELGAVAVLMNTAIAEAKDPVLMAEAMRAGVEGGRKAFLAGRIPMKLHAAASSPMSGLIGT.

The active-site Schiff-base intermediate with DXP is lysine 98. 1-deoxy-D-xylulose 5-phosphate is bound by residues glycine 159, 185–186 (AG), and 207–208 (NT).

This sequence belongs to the ThiG family. As to quaternary structure, homotetramer. Forms heterodimers with either ThiH or ThiS.

Its subcellular location is the cytoplasm. The enzyme catalyses [ThiS sulfur-carrier protein]-C-terminal-Gly-aminoethanethioate + 2-iminoacetate + 1-deoxy-D-xylulose 5-phosphate = [ThiS sulfur-carrier protein]-C-terminal Gly-Gly + 2-[(2R,5Z)-2-carboxy-4-methylthiazol-5(2H)-ylidene]ethyl phosphate + 2 H2O + H(+). It functions in the pathway cofactor biosynthesis; thiamine diphosphate biosynthesis. Its function is as follows. Catalyzes the rearrangement of 1-deoxy-D-xylulose 5-phosphate (DXP) to produce the thiazole phosphate moiety of thiamine. Sulfur is provided by the thiocarboxylate moiety of the carrier protein ThiS. In vitro, sulfur can be provided by H(2)S. This Anaeromyxobacter dehalogenans (strain 2CP-C) protein is Thiazole synthase.